The following is a 341-amino-acid chain: MNKLISILVPCYQSQPFLDRFFKSLLKQDWNGVKVIFFNDNKPDPTYEILKQFQQAHPQLAIEVHCGEKNVGVGGSRDQLINYVDTPYFYFVDPDDEFSDPNCFKAIVETIQGENFDIAVLNSIVYLQMLKNDFLIKHIPLKNIFQGKVKLNPDNTVNHLHYIQNNDQYIWNIVINTAFFKALDLQFVNRFIEDIAVWFPIMFKAQKVLWIDVNGVNYYLRPNSASTQKNSIKLLSFIEAYERLYFHLKKVGKLADFIDPNNKIESRFWRRQAFIWFSFINVSWMKAEFEQTKSVLQKLFDFMEANGIYDRVFTNKHHGIYLLWVNRLKHFKKLVQAQPHL.

It belongs to the glycosyltransferase 2 family. The cofactor is Mg(2+).

It localises to the cell membrane. It carries out the reaction a 1,2-diacyl-sn-glycerol + UDP-alpha-D-glucose = a 1,2-diacyl-3-O-(beta-D-glucopyranosyl)-sn-glycerol + UDP + H(+). It catalyses the reaction a 1,2-diacyl-sn-glycerol + UDP-alpha-D-galactose = a 1,2-diacyl-3-O-(beta-D-galactosyl)-sn-glycerol + UDP + H(+). The enzyme catalyses a 1,2-diacyl-3-O-(beta-D-galactosyl)-sn-glycerol + UDP-alpha-D-glucose = a 1,2-diacyl-3-O-[beta-D-glucopyranosyl-(1-&gt;6)-beta-D-galactopyranosyl]-sn-glycerol + UDP + H(+). The catalysed reaction is a 1,2-diacyl-3-O-(beta-D-galactosyl)-sn-glycerol + UDP-alpha-D-galactose = a 1,2-diacyl-3-O-[beta-D-galactosyl-(1-&gt;6)-beta-D-galactosyl]-sn-glycerol + UDP + H(+). Activated by the negatively charged lipid phosphatidylglycerol (PG). Its function is as follows. Processive glycosyltransferase involved in the biosynthesis of both the non-bilayer-prone beta-monoglycosyldiacylglycerol and the bilayer-forming membrane lipid glucosyl-galactosyldiacylglycerol and digalactosyl-diacylglycerol. These components contribute to regulate the properties and stability of the membrane. Catalyzes sequentially the transfers of glucosyl or galactosyl residues from UDP-Glc or UDP-Gal to diacylglycerol (DAG) acceptor to form the corresponding beta-glycosyl-DAG (3-O-(beta-D-glycopyranosyl)-1,2-diacyl-sn-glycerol). Then, only beta-galactosyl-DAG (3-O-(beta-D-galactopyranosyl)-1,2-diacyl-sn-glycerol) can act as acceptor to give the beta-glycosyl-beta-galactosyl-DAG product (3-O-(beta-D-glycopyranosyl-(1-&gt;6)-D-galactopyranosyl)-1,2-diacyl-sn-glycerol). It can also use alpha-Gal-beta-Gal-DAG, ceramide (Cer) and beta-Gal-Cer as sugar acceptors. The enzyme is supposed to be mainly a galactosyltransferase, with higher glycosyltransferase activity for the addition of the second glycosyl on beta-Gal-DAG as acceptor. The main glycolipid produced in vivo is beta-Glc-beta-Gal-DAG with a beta-1,6 linkage. The protein is Processive diacylglycerol beta-glycosyltransferase of Mycoplasma pneumoniae (strain ATCC 29342 / M129 / Subtype 1) (Mycoplasmoides pneumoniae).